The primary structure comprises 407 residues: Multifunctional CCA protein (407 aa).

ATP is bound by residues G8 and R11. Residues G8 and R11 each contribute to the CTP site. Positions 21 and 23 each coordinate Mg(2+). ATP-binding residues include R91, R137, and R140. CTP is bound by residues R91, R137, and R140. Positions 228–329 constitute an HD domain; that stretch reads TGIHTLLVAE…VKIFNKLDVW (102 aa).

Belongs to the tRNA nucleotidyltransferase/poly(A) polymerase family. Bacterial CCA-adding enzyme type 1 subfamily. Monomer. Can also form homodimers and oligomers. It depends on Mg(2+) as a cofactor. Requires Ni(2+) as cofactor.

The enzyme catalyses a tRNA precursor + 2 CTP + ATP = a tRNA with a 3' CCA end + 3 diphosphate. The catalysed reaction is a tRNA with a 3' CCA end + 2 CTP + ATP = a tRNA with a 3' CCACCA end + 3 diphosphate. In terms of biological role, catalyzes the addition and repair of the essential 3'-terminal CCA sequence in tRNAs without using a nucleic acid template. Adds these three nucleotides in the order of C, C, and A to the tRNA nucleotide-73, using CTP and ATP as substrates and producing inorganic pyrophosphate. tRNA 3'-terminal CCA addition is required both for tRNA processing and repair. Also involved in tRNA surveillance by mediating tandem CCA addition to generate a CCACCA at the 3' terminus of unstable tRNAs. While stable tRNAs receive only 3'-terminal CCA, unstable tRNAs are marked with CCACCA and rapidly degraded. This chain is Multifunctional CCA protein, found in Vibrio vulnificus (strain CMCP6).